We begin with the raw amino-acid sequence, 268 residues long: Stomatin homolog PYRAB06580 (268 aa).

The chain crosses the membrane as a helical span at residues 1 to 21 (MILPTNFFVTTIILLFILIFL). Coiled coils occupy residues 125–152 (GQAHLDELLSERDKLNMQLQRIIDEATD) and 178–213 (KQAEAERERRARITLAEAERQAAEKLREAAEIISEH).

It belongs to the band 7/mec-2 family. In terms of assembly, homotrimer.

The protein resides in the membrane. The protein is Stomatin homolog PYRAB06580 of Pyrococcus abyssi (strain GE5 / Orsay).